The chain runs to 111 residues: Transcription initiation factor IIA subunit 2 (111 aa).

It belongs to the TFIIA subunit 2 family. As to quaternary structure, TFIIA is a heterodimer of the large unprocessed subunit 1 and a small subunit gamma. It was originally believed to be a heterotrimer of an alpha, a beta and a gamma subunit. Interacts with NCOA6 general coactivator. TFIIA forms a complex with TBP.

The protein localises to the nucleus. In terms of biological role, TFIIA is a component of the transcription machinery of RNA polymerase II and plays an important role in transcriptional activation. TFIIA in a complex with TBP mediates transcriptional activity. The sequence is that of Transcription initiation factor IIA subunit 2 (gtf2a2) from Paralichthys olivaceus (Bastard halibut).